A 229-amino-acid chain; its full sequence is PHO85 cyclin-5 (229 aa).

The span at 1–24 shows a compositional bias: basic and acidic residues; the sequence is MDGNHRFTPDSKEFNTVVKSKESS. Positions 1 to 46 are disordered; the sequence is MDGNHRFTPDSKEFNTVVKSKESSTGRNPYQTPPLEHNGTHHQTNY.

It belongs to the cyclin family. PCL1,2 subfamily. In terms of assembly, forms a cyclin-CDK complex with PHO85.

Its function is as follows. Cyclin partner of the cyclin-dependent kinase (CDK) PHO85. Positively controls degradation of transcription factor GCN4 under favorable growth conditions. The PCL5-PHO85 cyclin-CDK holoenzyme phosphorylates GCN4, which is required for its degradation by the E3 ubiquitin ligase complex SCF(Cdc4). Amino acid starvation reduces PCL5-PHO85-associated GCN4 kinase activity and leads to stabilization of GCN4. This Saccharomyces cerevisiae (strain ATCC 204508 / S288c) (Baker's yeast) protein is PHO85 cyclin-5 (PCL5).